The chain runs to 249 residues: NAD(P)H-quinone oxidoreductase subunit K (249 aa).

Positions 65, 66, 130, and 161 each coordinate [4Fe-4S] cluster.

It belongs to the complex I 20 kDa subunit family. As to quaternary structure, NDH-1 can be composed of about 15 different subunits; different subcomplexes with different compositions have been identified which probably have different functions. The cofactor is [4Fe-4S] cluster.

Its subcellular location is the cellular thylakoid membrane. The enzyme catalyses a plastoquinone + NADH + (n+1) H(+)(in) = a plastoquinol + NAD(+) + n H(+)(out). The catalysed reaction is a plastoquinone + NADPH + (n+1) H(+)(in) = a plastoquinol + NADP(+) + n H(+)(out). In terms of biological role, NDH-1 shuttles electrons from an unknown electron donor, via FMN and iron-sulfur (Fe-S) centers, to quinones in the respiratory and/or the photosynthetic chain. The immediate electron acceptor for the enzyme in this species is believed to be plastoquinone. Couples the redox reaction to proton translocation, and thus conserves the redox energy in a proton gradient. Cyanobacterial NDH-1 also plays a role in inorganic carbon-concentration. This chain is NAD(P)H-quinone oxidoreductase subunit K, found in Prochlorococcus marinus (strain NATL2A).